The following is a 307-amino-acid chain: Secondary metabolism regulator LAE1 (307 aa).

This sequence belongs to the methyltransferase superfamily. LaeA methyltransferase family. Component of the heterotrimeric velvet complex composed of LAE1, VEL1 and VEL2; VEL1 acting as a bridging protein between LAE1 and VEL2.

Its subcellular location is the nucleus. The catalysed reaction is L-methionyl-[protein] + S-adenosyl-L-methionine = S-methyl-L-methionyl-[protein] + S-adenosyl-L-homocysteine. In terms of biological role, methyltransferase that performs automethylation. No other methyl-accepting substrate has been identified yet. Component of the velvet transcription factor complex that acts as a global regulator for secondary metabolite gene expression. Controls the expression of the T-toxin gene cluster. Promotes oxidative stress tolerance and acts as a virulence factors during infection. Negatively regulate mycelial pigmentation and controls sexual development, as well as asexual development during vegetative growth. This Cochliobolus heterostrophus (strain C5 / ATCC 48332 / race O) (Southern corn leaf blight fungus) protein is Secondary metabolism regulator LAE1.